A 180-amino-acid chain; its full sequence is Cell number regulator 7 (180 aa).

A helical membrane pass occupies residues Ala-80–Ser-102.

This sequence belongs to the cornifelin family. In terms of tissue distribution, expressed in roots, leaves, immature ears and silks. Detected preferentially in silks.

The protein resides in the membrane. This chain is Cell number regulator 7 (CNR7), found in Zea mays (Maize).